The sequence spans 416 residues: Transcription termination factor Rho (416 aa).

The 71-residue stretch at 51 to 121 (LIYSYGELDI…LKLIYVNGEK (71 aa)) folds into the Rho RNA-BD domain. Residues 162–167 (GKGQRG), 174–179 (KAGKTT), and Arg-205 each bind ATP.

This sequence belongs to the Rho family. In terms of assembly, homohexamer. The homohexamer assembles into an open ring structure.

Functionally, facilitates transcription termination by a mechanism that involves Rho binding to the nascent RNA, activation of Rho's RNA-dependent ATPase activity, and release of the mRNA from the DNA template. This is Transcription termination factor Rho from Streptobacillus moniliformis (strain ATCC 14647 / DSM 12112 / NCTC 10651 / 9901).